Consider the following 257-residue polypeptide: Diphthine synthase (257 aa).

Residues leucine 9, aspartate 83, methionine 86, 111-112 (SI), and isoleucine 163 contribute to the S-adenosyl-L-methionine site.

Belongs to the diphthine synthase family. As to quaternary structure, homodimer.

It carries out the reaction 2-[(3S)-amino-3-carboxypropyl]-L-histidyl-[translation elongation factor 2] + 3 S-adenosyl-L-methionine = diphthine-[translation elongation factor 2] + 3 S-adenosyl-L-homocysteine + 3 H(+). It functions in the pathway protein modification; peptidyl-diphthamide biosynthesis. Its function is as follows. S-adenosyl-L-methionine-dependent methyltransferase that catalyzes the trimethylation of the amino group of the modified target histidine residue in translation elongation factor 2 (EF-2), to form an intermediate called diphthine. The three successive methylation reactions represent the second step of diphthamide biosynthesis. This chain is Diphthine synthase, found in Thermoplasma acidophilum (strain ATCC 25905 / DSM 1728 / JCM 9062 / NBRC 15155 / AMRC-C165).